The sequence spans 195 residues: Probable GTP-binding protein EngB (195 aa).

One can recognise an EngB-type G domain in the interval 24 to 195 (ELPEIALAGR…EAWDAILEKL (172 aa)). Residues 32–39 (GRSNVGKS), 59–63 (GKTQL), 77–80 (DVPG), 144–147 (TKAD), and 176–178 (FSS) each bind GTP. Mg(2+) is bound by residues serine 39 and threonine 61.

The protein belongs to the TRAFAC class TrmE-Era-EngA-EngB-Septin-like GTPase superfamily. EngB GTPase family. Mg(2+) is required as a cofactor.

Necessary for normal cell division and for the maintenance of normal septation. The protein is Probable GTP-binding protein EngB of Streptococcus pneumoniae (strain ATCC 700669 / Spain 23F-1).